The primary structure comprises 534 residues: Peptide chain release factor 3 (534 aa).

The tr-type G domain maps to 9-278 (SRRRTFAIIS…FFVEHAPSPQ (270 aa)). GTP-binding positions include 18-25 (SHPDAGKT), 86-90 (DTPGH), and 140-143 (NKLD).

This sequence belongs to the TRAFAC class translation factor GTPase superfamily. Classic translation factor GTPase family. PrfC subfamily.

Its subcellular location is the cytoplasm. Its function is as follows. Increases the formation of ribosomal termination complexes and stimulates activities of RF-1 and RF-2. It binds guanine nucleotides and has strong preference for UGA stop codons. It may interact directly with the ribosome. The stimulation of RF-1 and RF-2 is significantly reduced by GTP and GDP, but not by GMP. The chain is Peptide chain release factor 3 from Stenotrophomonas maltophilia (strain K279a).